The primary structure comprises 139 residues: Acidic phospholipase A2 S1E6-c (139 aa).

The signal sequence occupies residues 1 to 16; the sequence is MRTLWILAVLLVGVEG. Intrachain disulfides connect C42–C132, C44–C60, C59–C111, C65–C139, C66–C104, C73–C97, and C91–C102. Residues Y43, G45, and G47 each coordinate Ca(2+). The active site involves H63. D64 contacts Ca(2+). Residue D105 is part of the active site.

Belongs to the phospholipase A2 family. Group II subfamily. D49 sub-subfamily. Homodimer. Ca(2+) is required as a cofactor. As to expression, expressed by the venom gland.

The protein localises to the secreted. The catalysed reaction is a 1,2-diacyl-sn-glycero-3-phosphocholine + H2O = a 1-acyl-sn-glycero-3-phosphocholine + a fatty acid + H(+). Snake venom phospholipase A2 (PLA2) that inhibits ADP-induced platelet aggregation. PLA2 catalyzes the calcium-dependent hydrolysis of the 2-acyl groups in 3-sn-phosphoglycerides. The polypeptide is Acidic phospholipase A2 S1E6-c (Calloselasma rhodostoma (Malayan pit viper)).